The sequence spans 980 residues: Protein translocase subunit SecA (980 aa).

Residues Q109, 127-131, and D529 each bind ATP; that span reads GEGKT. A disordered region spans residues 954-980; sequence QKIGRNDPCPCGSGKKYKHCHGKDNPQ. Zn(2+)-binding residues include C962, C964, C973, and H974.

The protein belongs to the SecA family. In terms of assembly, monomer and homodimer. Part of the essential Sec protein translocation apparatus which comprises SecA, SecYEG and auxiliary proteins SecDF. Other proteins may also be involved. Zn(2+) serves as cofactor.

Its subcellular location is the cell inner membrane. It is found in the cytoplasm. It catalyses the reaction ATP + H2O + cellular proteinSide 1 = ADP + phosphate + cellular proteinSide 2.. Part of the Sec protein translocase complex. Interacts with the SecYEG preprotein conducting channel. Has a central role in coupling the hydrolysis of ATP to the transfer of proteins into and across the cell membrane, serving as an ATP-driven molecular motor driving the stepwise translocation of polypeptide chains across the membrane. The chain is Protein translocase subunit SecA from Brachyspira hyodysenteriae (strain ATCC 49526 / WA1).